The chain runs to 88 residues: Period circadian protein (88 aa).

The tract at residues 23-88 (VTNTSIAGTG…VTLTESLLNK (66 aa)) is disordered. 16 repeat units span residues 30 to 31 (GT), 33 to 34 (GT), 35 to 36 (GT), 37 to 38 (GT), 39 to 40 (GT), 41 to 42 (GT), 43 to 44 (GT), 45 to 46 (GT), 47 to 48 (GT), 49 to 50 (GT), 51 to 52 (GT), 53 to 54 (GT), 55 to 56 (GT), 57 to 58 (GT), 59 to 60 (GT), and 61 to 62 (GN). Residues 30-62 (GTGGTGTGTGTGTGTGTGTGTGTGTGTGTGTGN) form a 16 X 2 AA tandem repeats of G-[TN] region. Residues 30-62 (GTGGTGTGTGTGTGTGTGTGTGTGTGTGTGTGN) show a composition bias toward gly residues. Over residues 79–88 (VTLTESLLNK) the composition is skewed to polar residues.

Forms a heterodimer with timeless (TIM); the complex then translocates into the nucleus. Phosphorylated with a circadian rhythmicity, probably by the double-time protein (dbt). Phosphorylation could be implicated in the stability of per monomer and in the formation of heterodimer per-tim.

The protein localises to the nucleus. Its subcellular location is the cytoplasm. The protein resides in the perinuclear region. Essential for biological clock functions. Determines the period length of circadian and ultradian rhythms; an increase in PER dosage leads to shortened circadian rhythms and a decrease leads to lengthened circadian rhythms. Essential for the circadian rhythmicity of locomotor activity, eclosion behavior, and for the rhythmic component of the male courtship song that originates in the thoracic nervous system. The biological cycle depends on the rhythmic formation and nuclear localization of the TIM-PER complex. Light induces the degradation of TIM, which promotes elimination of PER. Nuclear activity of the heterodimer coordinatively regulates PER and TIM transcription through a negative feedback loop. Behaves as a negative element in circadian transcriptional loop. Does not appear to bind DNA, suggesting indirect transcriptional inhibition. This Drosophila teissieri (Fruit fly) protein is Period circadian protein (per).